Consider the following 379-residue polypeptide: UDP-N-acetylglucosamine--N-acetylmuramyl-(pentapeptide) pyrophosphoryl-undecaprenol N-acetylglucosamine transferase (379 aa).

UDP-N-acetyl-alpha-D-glucosamine-binding positions include 10-12, N124, R161, S195, and Q291; that span reads TAG.

This sequence belongs to the glycosyltransferase 28 family. MurG subfamily.

It localises to the cell membrane. The catalysed reaction is di-trans,octa-cis-undecaprenyl diphospho-N-acetyl-alpha-D-muramoyl-L-alanyl-D-glutamyl-meso-2,6-diaminopimeloyl-D-alanyl-D-alanine + UDP-N-acetyl-alpha-D-glucosamine = di-trans,octa-cis-undecaprenyl diphospho-[N-acetyl-alpha-D-glucosaminyl-(1-&gt;4)]-N-acetyl-alpha-D-muramoyl-L-alanyl-D-glutamyl-meso-2,6-diaminopimeloyl-D-alanyl-D-alanine + UDP + H(+). Its pathway is cell wall biogenesis; peptidoglycan biosynthesis. Cell wall formation. Catalyzes the transfer of a GlcNAc subunit on undecaprenyl-pyrophosphoryl-MurNAc-pentapeptide (lipid intermediate I) to form undecaprenyl-pyrophosphoryl-MurNAc-(pentapeptide)GlcNAc (lipid intermediate II). The sequence is that of UDP-N-acetylglucosamine--N-acetylmuramyl-(pentapeptide) pyrophosphoryl-undecaprenol N-acetylglucosamine transferase from Thermobifida fusca (strain YX).